Reading from the N-terminus, the 67-residue chain is Protein AaeX (67 aa).

The next 2 membrane-spanning stretches (helical) occupy residues 10-30 and 43-63; these read FGLSFPPVFFVLMVSLTLFFV and FVWHPALFNSALFCCLFYLLF.

Belongs to the AaeX family.

The protein resides in the cell membrane. This chain is Protein AaeX, found in Pectobacterium atrosepticum (strain SCRI 1043 / ATCC BAA-672) (Erwinia carotovora subsp. atroseptica).